The chain runs to 248 residues: 23S rRNA (guanosine-2'-O-)-methyltransferase RlmB (248 aa).

Gly200, Ile220, and Leu229 together coordinate S-adenosyl-L-methionine.

Belongs to the class IV-like SAM-binding methyltransferase superfamily. RNA methyltransferase TrmH family. RlmB subfamily.

The protein resides in the cytoplasm. The catalysed reaction is guanosine(2251) in 23S rRNA + S-adenosyl-L-methionine = 2'-O-methylguanosine(2251) in 23S rRNA + S-adenosyl-L-homocysteine + H(+). In terms of biological role, specifically methylates the ribose of guanosine 2251 in 23S rRNA. This is 23S rRNA (guanosine-2'-O-)-methyltransferase RlmB from Acinetobacter baylyi (strain ATCC 33305 / BD413 / ADP1).